Consider the following 256-residue polypeptide: Ras-related protein RabJ (256 aa).

16–23 (GSSDVGKT) provides a ligand contact to GTP. The short motif at 38-46 (LTSTIGASF) is the Effector region element. GTP contacts are provided by residues 64–68 (DSAGQ) and 122–125 (NKID). The segment at 229-256 (NGHLQGSINGHNNQNSTNYSDNSDQCCG) is disordered. The span at 230-256 (GHLQGSINGHNNQNSTNYSDNSDQCCG) shows a compositional bias: polar residues. Residues C254 and C255 are each lipidated (S-geranylgeranyl cysteine).

This sequence belongs to the small GTPase superfamily. Rab family.

The protein resides in the cell membrane. This Dictyostelium discoideum (Social amoeba) protein is Ras-related protein RabJ (rabJ).